Here is a 347-residue protein sequence, read N- to C-terminus: MSDRLTLLRPDDWHIHLRDGAVLPHTVADVARTFGRAIIMPNLVPPVRNAQQADAYRQRILAARPAGSRFEPLMVLYLTDQTTPEDIRTAKASGFVHAAKLYPAGATTNSDSGVTSIDKIFPALEAMAEVGMLLLVHGEVTRGEIDVFDREKVFIDEHLRRVVERFPTLKVVFEHITTGDAVQFVNEASANVAATITAHHLLYNRNHMLVGGIRPHFYCLPILKRNTHQVALLDAATSGSGKFFLGTDSAPHAQHAKENACGCAGCYTAYAAIELYAEAFEQRNALDKLEGFASLHGPAFYGLPANQDTITLVRDEWTAPTSLPFGELTVIPLRAGETLRWRLEEHA.

The Zn(2+) site is built by His14 and His16. Substrate is bound by residues 16–18 and Asn42; that span reads HLR. The Zn(2+) site is built by Lys100, His137, and His175. The residue at position 100 (Lys100) is an N6-carboxylysine. Position 137 (His137) interacts with substrate. Leu220 serves as a coordination point for substrate. A Zn(2+)-binding site is contributed by Asp248. Residue Asp248 is part of the active site. 2 residues coordinate substrate: His252 and Ala264.

It belongs to the metallo-dependent hydrolases superfamily. DHOase family. Class II DHOase subfamily. As to quaternary structure, homodimer. Requires Zn(2+) as cofactor.

The catalysed reaction is (S)-dihydroorotate + H2O = N-carbamoyl-L-aspartate + H(+). The protein operates within pyrimidine metabolism; UMP biosynthesis via de novo pathway; (S)-dihydroorotate from bicarbonate: step 3/3. Functionally, catalyzes the reversible cyclization of carbamoyl aspartate to dihydroorotate. The polypeptide is Dihydroorotase (Pseudomonas syringae pv. tomato (strain ATCC BAA-871 / DC3000)).